Here is a 69-residue protein sequence, read N- to C-terminus: DNA-directed RNA polymerase subunit epsilon (69 aa).

Belongs to the RNA polymerase subunit epsilon family. As to quaternary structure, RNAP is composed of a core of 2 alpha, a beta and a beta' subunit. The core is associated with a delta subunit, and at least one of epsilon or omega. When a sigma factor is associated with the core the holoenzyme is formed, which can initiate transcription.

The enzyme catalyses RNA(n) + a ribonucleoside 5'-triphosphate = RNA(n+1) + diphosphate. In terms of biological role, a non-essential component of RNA polymerase (RNAP). This chain is DNA-directed RNA polymerase subunit epsilon, found in Halalkalibacterium halodurans (strain ATCC BAA-125 / DSM 18197 / FERM 7344 / JCM 9153 / C-125) (Bacillus halodurans).